A 695-amino-acid polypeptide reads, in one-letter code: Elongation factor G 1 (695 aa).

The tr-type G domain occupies 6 to 281 (TRYRNIGIFA…AVVDYLPNPK (276 aa)). GTP-binding positions include 15 to 22 (AHVDAGKT), 79 to 83 (DTPGH), and 133 to 136 (NKLD).

It belongs to the TRAFAC class translation factor GTPase superfamily. Classic translation factor GTPase family. EF-G/EF-2 subfamily.

The protein localises to the cytoplasm. Its function is as follows. Catalyzes the GTP-dependent ribosomal translocation step during translation elongation. During this step, the ribosome changes from the pre-translocational (PRE) to the post-translocational (POST) state as the newly formed A-site-bound peptidyl-tRNA and P-site-bound deacylated tRNA move to the P and E sites, respectively. Catalyzes the coordinated movement of the two tRNA molecules, the mRNA and conformational changes in the ribosome. This is Elongation factor G 1 (fusA) from Synechocystis sp. (strain ATCC 27184 / PCC 6803 / Kazusa).